The sequence spans 363 residues: Cytoplasmic tRNA 2-thiolation protein 1 (363 aa).

A disordered region spans residues 340-363 (ASLNGTPRTPPTPAEPVEGIERAA).

The protein belongs to the TtcA family. CTU1/NCS6/ATPBD3 subfamily.

The protein resides in the cytoplasm. It participates in tRNA modification; 5-methoxycarbonylmethyl-2-thiouridine-tRNA biosynthesis. Its function is as follows. Plays a central role in 2-thiolation of mcm(5)S(2)U at tRNA wobble positions of tRNA(Lys), tRNA(Glu) and tRNA(Gln). Directly binds tRNAs and probably acts by catalyzing adenylation of tRNAs, an intermediate required for 2-thiolation. It is unclear whether it acts as a sulfurtransferase that transfers sulfur from thiocarboxylated URM1 onto the uridine of tRNAs at wobble position. Prior mcm(5) tRNA modification by the elongator complex is required for 2-thiolation. May also be involved in protein urmylation. This chain is Cytoplasmic tRNA 2-thiolation protein 1, found in Cryptococcus neoformans var. neoformans serotype D (strain B-3501A) (Filobasidiella neoformans).